We begin with the raw amino-acid sequence, 475 residues long: Putative amidase AmiD (475 aa).

Catalysis depends on charge relay system residues Lys-93 and Ser-166. The active-site Acyl-ester intermediate is the Ser-190.

The protein belongs to the amidase family.

It carries out the reaction a monocarboxylic acid amide + H2O = a monocarboxylate + NH4(+). This chain is Putative amidase AmiD (amiD), found in Mycobacterium bovis (strain ATCC BAA-935 / AF2122/97).